A 193-amino-acid chain; its full sequence is Probable molybdenum cofactor guanylyltransferase (193 aa).

GTP is bound by residues 9–11, Lys-21, Asp-64, and Asp-93; that span reads TAG. Asp-93 lines the Mg(2+) pocket.

This sequence belongs to the MobA family. Mg(2+) serves as cofactor.

The protein resides in the cytoplasm. It carries out the reaction Mo-molybdopterin + GTP + H(+) = Mo-molybdopterin guanine dinucleotide + diphosphate. In terms of biological role, transfers a GMP moiety from GTP to Mo-molybdopterin (Mo-MPT) cofactor (Moco or molybdenum cofactor) to form Mo-molybdopterin guanine dinucleotide (Mo-MGD) cofactor. This chain is Probable molybdenum cofactor guanylyltransferase, found in Deinococcus radiodurans (strain ATCC 13939 / DSM 20539 / JCM 16871 / CCUG 27074 / LMG 4051 / NBRC 15346 / NCIMB 9279 / VKM B-1422 / R1).